Reading from the N-terminus, the 190-residue chain is Small ribosomal subunit protein eS7B (190 aa).

Ser-2 is subject to N-acetylserine. Ser-10 and Ser-31 each carry phosphoserine. Glycyl lysine isopeptide (Lys-Gly) (interchain with G-Cter in ubiquitin) cross-links involve residues Lys-83 and Lys-84.

It belongs to the eukaryotic ribosomal protein eS7 family. As to quaternary structure, component of the small ribosomal subunit (SSU). Mature yeast ribosomes consist of a small (40S) and a large (60S) subunit. The 40S small subunit contains 1 molecule of ribosomal RNA (18S rRNA) and 33 different proteins (encoded by 57 genes). The large 60S subunit contains 3 rRNA molecules (25S, 5.8S and 5S rRNA) and 46 different proteins (encoded by 81 genes). Interacts with snoRNA U3. uS11 interacts with MPP10. Component of the ribosomal small subunit (SSU) processome composed of at least 40 protein subunits and snoRNA U3. In terms of processing, N-terminally acetylated by acetyltransferase NatA. Post-translationally, ubiquitinated at Lys-83 and Lys-84 in response to stalled ribosomes, leading to activation of the No-Go Decay (NGD) pathway: first monoubiquitinated by MOT2/NOT4, followed by formation by HEL2 of 'Lys-63'-linked polyubiquitin chains on monoubiquitin.

The protein resides in the cytoplasm. The protein localises to the nucleus. It localises to the nucleolus. Its function is as follows. Component of the ribosome, a large ribonucleoprotein complex responsible for the synthesis of proteins in the cell. The small ribosomal subunit (SSU) binds messenger RNAs (mRNAs) and translates the encoded message by selecting cognate aminoacyl-transfer RNA (tRNA) molecules. The large subunit (LSU) contains the ribosomal catalytic site termed the peptidyl transferase center (PTC), which catalyzes the formation of peptide bonds, thereby polymerizing the amino acids delivered by tRNAs into a polypeptide chain. The nascent polypeptides leave the ribosome through a tunnel in the LSU and interact with protein factors that function in enzymatic processing, targeting, and the membrane insertion of nascent chains at the exit of the ribosomal tunnel. eS7 is involved in nucleolar processing of pre-18S ribosomal RNA and ribosome assembly. This Saccharomyces cerevisiae (strain ATCC 204508 / S288c) (Baker's yeast) protein is Small ribosomal subunit protein eS7B.